We begin with the raw amino-acid sequence, 531 residues long: SWI/SNF-related matrix-associated actin-dependent regulator of chromatin subfamily D member 2 (531 aa).

Residues 20-85 (AVAAALGAPP…MSPGSRMPMA (66 aa)) form a disordered region. The segment covering 34 to 45 (PGMLPNPALRGP) has biased composition (low complexity). Asymmetric dimethylarginine is present on residues R81 and R104. The tract at residues 202–226 (FSPSKADGDNSGTAGTPGGTPAADK) is disordered. Phosphoserine is present on S203. Residue T217 is modified to Phosphothreonine. A Glycyl lysine isopeptide (Lys-Gly) (interchain with G-Cter in SUMO2) cross-link involves residue K226. One can recognise an SWIB/MDM2 domain in the interval 306-383 (HQPPQYKLDP…PMKLAGLLQH (78 aa)).

This sequence belongs to the SMARCD family. In terms of assembly, component of the multiprotein chromatin-remodeling complexes SWI/SNF: SWI/SNF-A (BAF), SWI/SNF-B (PBAF) and related complexes. The canonical complex contains a catalytic subunit (either SMARCA4/BRG1/BAF190A or SMARCA2/BRM/BAF190B), and at least SMARCE1, ACTL6A/BAF53, SMARCC1/BAF155, SMARCC2/BAF170, and SMARCB1/SNF5/BAF47. Other subunits specific to each of the complexes may also be present permitting several possible combinations developmentally and tissue specific. Component of the BAF complex, which includes at least actin (ACTB), ARID1A/BAF250A, ARID1B/BAF250B, SMARCA2/BRM, SMARCA4/BRG1, ACTL6A/BAF53, ACTL6B/BAF53B, SMARCE1/BAF57, SMARCC1/BAF155, SMARCC2/BAF170, SMARCB1/SNF5/INI1, and one or more SMARCD1/BAF60A, SMARCD2/BAF60B, or SMARCD3/BAF60C. In muscle cells, the BAF complex also contains DPF3. Component of the SWI/SNF-B (PBAF) chromatin remodeling complex, at least composed of SMARCA4/BRG1, SMARCB1/BAF47/SNF5, ACTL6A/BAF53A or ACTL6B/BAF53B, SMARCE1/BAF57, SMARCD1/BAF60A, SMARCD2/BAF60B, perhaps SMARCD3/BAF60C, SMARCC1/BAF155, SMARCC2/BAF170, PBRM1/BAF180, ARID2/BAF200 and actin (ACTB). Interacts with UNKL. Interacts with CEBPE. In terms of processing, ubiquitinated through a signaling process involving RAC1 and the RING finger protein UNKL.

It is found in the nucleus. Functionally, involved in transcriptional activation and repression of select genes by chromatin remodeling (alteration of DNA-nucleosome topology). Component of SWI/SNF chromatin remodeling complexes that carry out key enzymatic activities, changing chromatin structure by altering DNA-histone contacts within a nucleosome in an ATP-dependent manner. Critical regulator of myeloid differentiation, controlling granulocytopoiesis and the expression of genes involved in neutrophil granule formation. The chain is SWI/SNF-related matrix-associated actin-dependent regulator of chromatin subfamily D member 2 (Smarcd2) from Rattus norvegicus (Rat).